Reading from the N-terminus, the 530-residue chain is Copine-B (530 aa).

C2 domains are found at residues 1–125 and 130–253; these read MTTP…SEIK and ETGV…PLIN. Ca(2+) contacts are provided by aspartate 25, aspartate 31, aspartate 85, aspartate 87, and aspartate 100. Residues 294–513 form the VWFA domain; the sequence is NLMVAIDCTA…ETLREIPQQL (220 aa).

This sequence belongs to the copine family. Ca(2+) serves as cofactor.

The sequence is that of Copine-B (cpnB-1) from Dictyostelium discoideum (Social amoeba).